Here is a 64-residue protein sequence, read N- to C-terminus: Large ribosomal subunit protein bL32 (64 aa).

The segment covering 1–16 has biased composition (basic residues); it reads MAVPKHRKSKAKKRSR. The interval 1–22 is disordered; sequence MAVPKHRKSKAKKRSRQAANDK.

Belongs to the bacterial ribosomal protein bL32 family.

The chain is Large ribosomal subunit protein bL32 from Brachyspira hyodysenteriae (strain ATCC 49526 / WA1).